Consider the following 188-residue polypeptide: Deoxyuridine 5'-triphosphate nucleotidohydrolase (188 aa).

The disordered stretch occupies residues 1 to 34 (MGEMTSGVDGHGSTKRTTSEAQKMDFNTDRGSAI).

This sequence belongs to the dUTPase family. Mg(2+) is required as a cofactor.

It carries out the reaction dUTP + H2O = dUMP + diphosphate + H(+). In terms of biological role, this enzyme is involved in nucleotide metabolism: it produces dUMP, the immediate precursor of thymidine nucleotides and it decreases the intracellular concentration of dUTP so that uracil cannot be incorporated into DNA. The protein is Deoxyuridine 5'-triphosphate nucleotidohydrolase (49) of Ictaluridae (bullhead catfishes).